The sequence spans 169 residues: Probable calcium-binding protein CML13 (169 aa).

The tract at residues 1 to 26 (MSTVKGQTRRERPRGARPHGLTKQKR) is disordered. Residues 15-24 (GARPHGLTKQ) show a composition bias toward basic residues. EF-hand domains follow at residues 24 to 59 (QKRQ…LGFE), 60 to 95 (MTEE…KIGE), 97 to 132 (DSKE…LGEN), and 133 to 168 (FTYQ…TGYG). Ca(2+) is bound by residues D37, D39, S41, T43, E48, D73, D75, S77, S79, E84, D110, D112, N114, K116, D121, D146, N148, D150, E152, and E157.

In terms of biological role, potential calcium sensor. In Oryza sativa subsp. japonica (Rice), this protein is Probable calcium-binding protein CML13 (CML13).